A 280-amino-acid chain; its full sequence is Probable endonuclease 4 (280 aa).

Zn(2+)-binding residues include His-69, His-109, Glu-145, Asp-179, His-182, His-216, Asp-229, His-231, and Glu-261.

This sequence belongs to the AP endonuclease 2 family. The cofactor is Zn(2+).

It catalyses the reaction Endonucleolytic cleavage to 5'-phosphooligonucleotide end-products.. In terms of biological role, endonuclease IV plays a role in DNA repair. It cleaves phosphodiester bonds at apurinic or apyrimidinic (AP) sites, generating a 3'-hydroxyl group and a 5'-terminal sugar phosphate. The protein is Probable endonuclease 4 of Erwinia tasmaniensis (strain DSM 17950 / CFBP 7177 / CIP 109463 / NCPPB 4357 / Et1/99).